A 202-amino-acid polypeptide reads, in one-letter code: uncharacterized protein (202 aa).

The 81-residue stretch at 116 to 196 (LDLHGMTCSE…GKGTTWVLLK (81 aa)) folds into the Smr domain.

This is an uncharacterized protein from Treponema pallidum (strain Nichols).